A 435-amino-acid polypeptide reads, in one-letter code: Histidinol dehydrogenase (435 aa).

Residues Y131, Q189, and N212 each coordinate NAD(+). Substrate-binding residues include S238, Q260, and H263. The Zn(2+) site is built by Q260 and H263. Active-site proton acceptor residues include E327 and H328. Residues H328, D361, E415, and H420 each coordinate substrate. D361 provides a ligand contact to Zn(2+). H420 is a binding site for Zn(2+).

This sequence belongs to the histidinol dehydrogenase family. In terms of assembly, homodimer. Zn(2+) serves as cofactor.

It carries out the reaction L-histidinol + 2 NAD(+) + H2O = L-histidine + 2 NADH + 3 H(+). The protein operates within amino-acid biosynthesis; L-histidine biosynthesis; L-histidine from 5-phospho-alpha-D-ribose 1-diphosphate: step 9/9. In terms of biological role, catalyzes the sequential NAD-dependent oxidations of L-histidinol to L-histidinaldehyde and then to L-histidine. This Buchnera aphidicola subsp. Baizongia pistaciae (strain Bp) protein is Histidinol dehydrogenase.